The primary structure comprises 277 residues: MSVPTVLERIVARKFQEVAERSARVSLAEMEHLAKGADAPRGFANALIEQAKRKQPAVIAEIKKASPSKGVIRENFVPSEIAVSYEKGGATCLSVLTDVDYFQGADEYLQQARAAVSLPVIRKDFMVDPYQIIEARALGADCVLLIVSALDDVKMAELAATAKEVGLDVLVEVHDGDELERALKTLDTPLVGVNNRNLHTFEVSLETTLDLLPRIPRDRLAITESGILNRADVELMEINDVYSFLVGEAFMRAEQPGLELQRLFFPEQVKKTVQQLD.

Belongs to the TrpC family.

It carries out the reaction 1-(2-carboxyphenylamino)-1-deoxy-D-ribulose 5-phosphate + H(+) = (1S,2R)-1-C-(indol-3-yl)glycerol 3-phosphate + CO2 + H2O. Its pathway is amino-acid biosynthesis; L-tryptophan biosynthesis; L-tryptophan from chorismate: step 4/5. This Pseudomonas putida (strain W619) protein is Indole-3-glycerol phosphate synthase.